The chain runs to 367 residues: MSLSRVSVTGVRNLHPVTLSPSPRINILYGANGSGKTSVLEAIHLLGIARSFRSSRLLPVIQYEQPSCTVFGQVDLAQGGHSNLGVSRDRQGEFQIRIDGQNARSAAQLAEILPLQLINPDSFRLLEGAPKIRRQFLDWGVFHVEPRFMATWQRLQKALKQRNSWLRHGTLDAASQAAWDRELCSASDEIDEFRRAYIKALKPVFEQTLSELVELEGLTLSYYRGWDKEKELSTVLASSIHRDQQMGHTQAGPQRADLRLRLGAHNAADILSRGQQKLVVCALRIAQGHLVSQVRRGQCIYLVDDLPSELDDNHRRALCRLLEELRCQVFITCVDQEFLREGWQTETPVALFHVEQGRITQTHDHRE.

30–37 (GANGSGKT) provides a ligand contact to ATP.

Belongs to the RecF family.

It localises to the cytoplasm. In terms of biological role, the RecF protein is involved in DNA metabolism; it is required for DNA replication and normal SOS inducibility. RecF binds preferentially to single-stranded, linear DNA. It also seems to bind ATP. This Pseudomonas syringae pv. syringae (strain B728a) protein is DNA replication and repair protein RecF.